The chain runs to 500 residues: Glycerol kinase (500 aa).

Threonine 13 lines the ADP pocket. Residues threonine 13, threonine 14, and serine 15 each contribute to the ATP site. A sn-glycerol 3-phosphate-binding site is contributed by threonine 13. Arginine 17 is an ADP binding site. Sn-glycerol 3-phosphate-binding residues include arginine 83, glutamate 84, tyrosine 136, and aspartate 246. Arginine 83, glutamate 84, tyrosine 136, aspartate 246, and glutamine 247 together coordinate glycerol. Residues threonine 268 and glycine 311 each coordinate ADP. 4 residues coordinate ATP: threonine 268, glycine 311, glutamine 315, and glycine 412. Positions 412 and 416 each coordinate ADP.

It belongs to the FGGY kinase family.

It carries out the reaction glycerol + ATP = sn-glycerol 3-phosphate + ADP + H(+). It functions in the pathway polyol metabolism; glycerol degradation via glycerol kinase pathway; sn-glycerol 3-phosphate from glycerol: step 1/1. Its activity is regulated as follows. Inhibited by fructose 1,6-bisphosphate (FBP). Key enzyme in the regulation of glycerol uptake and metabolism. Catalyzes the phosphorylation of glycerol to yield sn-glycerol 3-phosphate. This Francisella tularensis subsp. novicida (strain U112) protein is Glycerol kinase.